The sequence spans 91 residues: Large ribosomal subunit protein bL27 (91 aa).

Residues 1–21 (MAHKKSGGSSRNGRDSAGRRL) are disordered.

This sequence belongs to the bacterial ribosomal protein bL27 family.

The sequence is that of Large ribosomal subunit protein bL27 from Phenylobacterium zucineum (strain HLK1).